A 253-amino-acid chain; its full sequence is Uracil-DNA glycosylase (253 aa).

The active-site Proton acceptor is the Asp-79.

The protein belongs to the uracil-DNA glycosylase (UDG) superfamily. UNG family.

The protein localises to the cytoplasm. The enzyme catalyses Hydrolyzes single-stranded DNA or mismatched double-stranded DNA and polynucleotides, releasing free uracil.. Excises uracil residues from the DNA which can arise as a result of misincorporation of dUMP residues by DNA polymerase or due to deamination of cytosine. This Xylella fastidiosa (strain M12) protein is Uracil-DNA glycosylase.